A 292-amino-acid chain; its full sequence is Transcription antiterminator LacT (292 aa).

PRD domains are found at residues 66 to 170 and 172 to 284; these read NIPI…DDGE and VFGK…APAQ.

The protein belongs to the transcriptional antiterminator BglG family.

In terms of biological role, mediates positive regulation of the lac operon by functioning as an antiterminator factor of transcription. This Lacticaseibacillus casei (Lactobacillus casei) protein is Transcription antiterminator LacT (lacT).